The following is a 239-amino-acid chain: Small ribosomal subunit protein uS2c (239 aa).

This sequence belongs to the universal ribosomal protein uS2 family.

It is found in the plastid. In Aneura mirabilis (Parasitic liverwort), this protein is Small ribosomal subunit protein uS2c (rps2).